Consider the following 478-residue polypeptide: Cytochrome c lysine N-methyltransferase 1 (478 aa).

Positions 32-284 constitute an SET domain; it reads PCVSIERSQI…DRFEVFISYC (253 aa). The SET-like stretch occupies residues 199-299; the sequence is TRAVVLRVYA…VHFKHTYGFF (101 aa).

The protein belongs to the class V-like SAM-binding methyltransferase superfamily.

It localises to the cytoplasm. It is found in the cytosol. The catalysed reaction is L-lysyl-[cytochrome c] + S-adenosyl-L-methionine = N(6)-methyl-L-lysyl-[cytochrome c] + S-adenosyl-L-homocysteine + H(+). In terms of biological role, methyltransferase which mediates trimethylation of cytochrome c (CYC1). The sequence is that of Cytochrome c lysine N-methyltransferase 1 (CTM1) from Eremothecium gossypii (strain ATCC 10895 / CBS 109.51 / FGSC 9923 / NRRL Y-1056) (Yeast).